Consider the following 1372-residue polypeptide: DNA-directed RNA polymerase subunit beta' (1372 aa).

Cysteine 69, cysteine 71, cysteine 84, and cysteine 87 together coordinate Zn(2+). Mg(2+) contacts are provided by aspartate 460, aspartate 462, and aspartate 464. Positions 808, 882, 889, and 892 each coordinate Zn(2+).

Belongs to the RNA polymerase beta' chain family. As to quaternary structure, the RNAP catalytic core consists of 2 alpha, 1 beta, 1 beta' and 1 omega subunit. When a sigma factor is associated with the core the holoenzyme is formed, which can initiate transcription. Mg(2+) serves as cofactor. It depends on Zn(2+) as a cofactor.

The enzyme catalyses RNA(n) + a ribonucleoside 5'-triphosphate = RNA(n+1) + diphosphate. Functionally, DNA-dependent RNA polymerase catalyzes the transcription of DNA into RNA using the four ribonucleoside triphosphates as substrates. The sequence is that of DNA-directed RNA polymerase subunit beta' from Rickettsia rickettsii (strain Iowa).